The chain runs to 348 residues: Lipoyl synthase (348 aa).

Positions 55, 60, 66, 81, 85, 88, and 292 each coordinate [4Fe-4S] cluster. A Radical SAM core domain is found at 67-281 (WESREATFLI…ADAAKEMGFA (215 aa)).

The protein belongs to the radical SAM superfamily. Lipoyl synthase family. The cofactor is [4Fe-4S] cluster.

The protein resides in the cytoplasm. The catalysed reaction is [[Fe-S] cluster scaffold protein carrying a second [4Fe-4S](2+) cluster] + N(6)-octanoyl-L-lysyl-[protein] + 2 oxidized [2Fe-2S]-[ferredoxin] + 2 S-adenosyl-L-methionine + 4 H(+) = [[Fe-S] cluster scaffold protein] + N(6)-[(R)-dihydrolipoyl]-L-lysyl-[protein] + 4 Fe(3+) + 2 hydrogen sulfide + 2 5'-deoxyadenosine + 2 L-methionine + 2 reduced [2Fe-2S]-[ferredoxin]. Its pathway is protein modification; protein lipoylation via endogenous pathway; protein N(6)-(lipoyl)lysine from octanoyl-[acyl-carrier-protein]: step 2/2. Catalyzes the radical-mediated insertion of two sulfur atoms into the C-6 and C-8 positions of the octanoyl moiety bound to the lipoyl domains of lipoate-dependent enzymes, thereby converting the octanoylated domains into lipoylated derivatives. In Corynebacterium glutamicum (strain R), this protein is Lipoyl synthase.